We begin with the raw amino-acid sequence, 291 residues long: ATP synthase gamma chain (291 aa).

The protein belongs to the ATPase gamma chain family. As to quaternary structure, F-type ATPases have 2 components, CF(1) - the catalytic core - and CF(0) - the membrane proton channel. CF(1) has five subunits: alpha(3), beta(3), gamma(1), delta(1), epsilon(1). CF(0) has three main subunits: a, b and c.

It is found in the cell membrane. Produces ATP from ADP in the presence of a proton gradient across the membrane. The gamma chain is believed to be important in regulating ATPase activity and the flow of protons through the CF(0) complex. In Lachnoclostridium phytofermentans (strain ATCC 700394 / DSM 18823 / ISDg) (Clostridium phytofermentans), this protein is ATP synthase gamma chain.